A 391-amino-acid polypeptide reads, in one-letter code: Phosphoglycerate kinase (391 aa).

Residues 16–18 (DLN), Arg-31, 54–57 (HLGR), Arg-108, and Arg-141 contribute to the substrate site. Residues Lys-192, Glu-314, and 340-343 (GGDT) each bind ATP.

Belongs to the phosphoglycerate kinase family. In terms of assembly, monomer.

The protein resides in the cytoplasm. The catalysed reaction is (2R)-3-phosphoglycerate + ATP = (2R)-3-phospho-glyceroyl phosphate + ADP. It participates in carbohydrate degradation; glycolysis; pyruvate from D-glyceraldehyde 3-phosphate: step 2/5. This chain is Phosphoglycerate kinase, found in Coxiella burnetii (strain RSA 493 / Nine Mile phase I).